A 170-amino-acid polypeptide reads, in one-letter code: ATP synthase subunit b (170 aa).

The chain crosses the membrane as a helical span at residues 4-24 (ILLLGLALAPVALFASQGAVE).

This sequence belongs to the ATPase B chain family. F-type ATPases have 2 components, F(1) - the catalytic core - and F(0) - the membrane proton channel. F(1) has five subunits: alpha(3), beta(3), gamma(1), delta(1), epsilon(1). F(0) has three main subunits: a(1), b(2) and c(10-14). The alpha and beta chains form an alternating ring which encloses part of the gamma chain. F(1) is attached to F(0) by a central stalk formed by the gamma and epsilon chains, while a peripheral stalk is formed by the delta and b chains.

It localises to the cell inner membrane. F(1)F(0) ATP synthase produces ATP from ADP in the presence of a proton or sodium gradient. F-type ATPases consist of two structural domains, F(1) containing the extramembraneous catalytic core and F(0) containing the membrane proton channel, linked together by a central stalk and a peripheral stalk. During catalysis, ATP synthesis in the catalytic domain of F(1) is coupled via a rotary mechanism of the central stalk subunits to proton translocation. In terms of biological role, component of the F(0) channel, it forms part of the peripheral stalk, linking F(1) to F(0). The sequence is that of ATP synthase subunit b from Aliarcobacter butzleri (strain RM4018) (Arcobacter butzleri).